A 514-amino-acid chain; its full sequence is Beta-galactoside alpha-2,6-sialyltransferase 2 (514 aa).

Residues 1–10 lie on the Cytoplasmic side of the membrane; it reads MKSSLKQWRR. The helical; Signal-anchor for type II membrane protein transmembrane segment at 11–31 threads the bilayer; it reads LALGLILVWALLFLALLSYFM. Over 32–514 the chain is Lumenal; the sequence is ESRVDDPHAA…PGFNKVHCEP (483 aa). The span at 70-92 shows a compositional bias: low complexity; sequence ATSSAPSTSSNTQQEQSQEENPS. Positions 70 to 183 are disordered; that stretch reads ATSSAPSTSS…TKRVARHGSS (114 aa). Polar residues predominate over residues 119 to 132; it reads FGTQDVGSRSTGVS. A compositionally biased stretch (acidic residues) spans 145-166; sequence PQEDEDEEEEVIGGEEEDEEGG. 3 disulfides stabilise this stretch: Cys246–Cys512, Cys289–Cys441, and Cys459–Cys470. N-linked (GlcNAc...) asparagine glycosylation is found at Asn330, Asn350, and Asn357.

The protein belongs to the glycosyltransferase 29 family.

Its subcellular location is the golgi apparatus. The protein resides in the golgi stack membrane. It catalyses the reaction a beta-D-galactoside + CMP-N-acetyl-beta-neuraminate = an N-acetyl-alpha-neuraminyl-(2-&gt;6)-beta-D-galactosyl derivative + CMP + H(+). Functionally, transfers sialic acid from the donor of substrate CMP-sialic acid to galactose containing acceptor substrates. In Danio rerio (Zebrafish), this protein is Beta-galactoside alpha-2,6-sialyltransferase 2 (st6gal2).